Reading from the N-terminus, the 888-residue chain is MQTHEIRERFTNHFVNAGHQAVPSASLILDDPNLLFVNAGMVPFKPYFLGQQTPPFENGTATSIQKCVRTLDIEEVGITTRHNTFFQMAGNFSFGQYFKEGAITHAWGLLTGSVADGGFGLDPERLWVTVYLDDDEAAEIWEKKIGVPSERIQRLGMADNYWSMGVPGPCGPCSEIYYDRGEKYGKEGGPVADDNRYMEIWNLVFMEKERGQGIGKDNFDILGDLPKKNIDTGMGVERVACILQDVENVYETDLLRPVIDVAETLTGTKYGSDNTSDIRFRVIADHSRTGMMLILDGVTPGNEGRGYILRRLLRRIIRSARLLGATGETMEQFMNTIMDTMTPSYPEIADNRERIMRVAVTEERAFLKTLVSGTHLFEEAATSIKAAGSTKVAGAQAFALHDTYGFPIDLTLEMAAEAGLEVDVEGFDSLMAEQRSRAKADSQAKKHGHTDLSIYREWVDNNPTVFTGFEELDSQSKVLGLLSDGAKISEATEGQEVEVILDQSPLYAESGGQLGDRGQILLGDTVLDVHDVQKIGKKLWVHKALVANGGLAVGDEVVASVDKQWRHAARQAHTATHLIHAALRQVLGPTALQAGSMNKPGYLRFDFNYTEQLTPAQVEQIQAITNEAVDTDWAVNTVETSLEEAKAMGAMALFGENYGSTVRVVEIGGPFSMELCGGTHVAHSSQIGPVALLGESSIGSGVRRIEAYSGLNSFNYLSKERALAEGLASSLKAPSEELPERVAQLVDKLKAAEKEIEALHRQQLMAQTADLLNNAQEIGGVTTLLLRVKDNTNAGDLRTIATTLKDKLGDREGVLVIASDNAGKVPFVVAATKAAVARGAHSGNLVKLVGSYIDGRGGGKADLAQGSGANIAGLESAFGAVRAEIEAL.

Histidine 573, histidine 577, cysteine 676, and histidine 680 together coordinate Zn(2+).

Belongs to the class-II aminoacyl-tRNA synthetase family. Requires Zn(2+) as cofactor.

The protein resides in the cytoplasm. It carries out the reaction tRNA(Ala) + L-alanine + ATP = L-alanyl-tRNA(Ala) + AMP + diphosphate. Its function is as follows. Catalyzes the attachment of alanine to tRNA(Ala) in a two-step reaction: alanine is first activated by ATP to form Ala-AMP and then transferred to the acceptor end of tRNA(Ala). Also edits incorrectly charged Ser-tRNA(Ala) and Gly-tRNA(Ala) via its editing domain. In Corynebacterium glutamicum (strain ATCC 13032 / DSM 20300 / JCM 1318 / BCRC 11384 / CCUG 27702 / LMG 3730 / NBRC 12168 / NCIMB 10025 / NRRL B-2784 / 534), this protein is Alanine--tRNA ligase.